The chain runs to 345 residues: Phosphoribosylformylglycinamidine cyclo-ligase (345 aa).

The protein belongs to the AIR synthase family.

The protein localises to the cytoplasm. It carries out the reaction 2-formamido-N(1)-(5-O-phospho-beta-D-ribosyl)acetamidine + ATP = 5-amino-1-(5-phospho-beta-D-ribosyl)imidazole + ADP + phosphate + H(+). It functions in the pathway purine metabolism; IMP biosynthesis via de novo pathway; 5-amino-1-(5-phospho-D-ribosyl)imidazole from N(2)-formyl-N(1)-(5-phospho-D-ribosyl)glycinamide: step 2/2. In Tolumonas auensis (strain DSM 9187 / NBRC 110442 / TA 4), this protein is Phosphoribosylformylglycinamidine cyclo-ligase.